The sequence spans 430 residues: Enolase (430 aa).

The tract at residues Met-1 to Lys-140 is sufficient for secretion. Position 141 is a phosphothreonine (Thr-141). Residue Gln-163 participates in (2R)-2-phosphoglycerate binding. The active-site Proton donor is the Glu-205. Asp-242 provides a ligand contact to Mg(2+). Ser-259 bears the Phosphoserine mark. A Phosphotyrosine modification is found at Tyr-281. Mg(2+) contacts are provided by Glu-287 and Asp-314. Ser-325 is modified (phosphoserine). Lys-339, Arg-368, Ser-369, and Lys-390 together coordinate (2R)-2-phosphoglycerate. Lys-339 acts as the Proton acceptor in catalysis.

This sequence belongs to the enolase family. As to quaternary structure, homooctamer. Component of the RNA degradosome complex composed of rny, rnjA, rnjB, pnp, pfkA and eno (although rnjA and rnjB's presence is controversial). Mg(2+) serves as cofactor. Phosphorylated during sporulation.

Its subcellular location is the cytoplasm. It is found in the secreted. The protein resides in the cell surface. It carries out the reaction (2R)-2-phosphoglycerate = phosphoenolpyruvate + H2O. It participates in carbohydrate degradation; glycolysis; pyruvate from D-glyceraldehyde 3-phosphate: step 4/5. With respect to regulation, covalent binding to the substrate (probably 2-PG) at Lys-339 of a small fraction of enolase causes inactivation of the enzyme, and possibly serves as a signal for the export of the protein. Citrate acts as a non-competitive inhibitor for both forward and reverse reactions, probably by chelating Mg(2+). Functionally, catalyzes the reversible conversion of 2-phosphoglycerate (2-PG) into phosphoenolpyruvate (PEP). It is essential for the degradation of carbohydrates via glycolysis. In terms of biological role, a component of the RNA degradosome, a multi-enzyme complex involved in RNA processing and messenger RNA degradation. The protein is Enolase of Bacillus subtilis (strain 168).